Reading from the N-terminus, the 201-residue chain is Imidazole glycerol phosphate synthase subunit HisH (201 aa).

Residues 1–201 (MIIVIDYDAG…ILKKFVDLCD (201 aa)) enclose the Glutamine amidotransferase type-1 domain. The Nucleophile role is filled by Cys-79. Residues His-181 and Glu-183 contribute to the active site.

As to quaternary structure, heterodimer of HisH and HisF.

It localises to the cytoplasm. It catalyses the reaction 5-[(5-phospho-1-deoxy-D-ribulos-1-ylimino)methylamino]-1-(5-phospho-beta-D-ribosyl)imidazole-4-carboxamide + L-glutamine = D-erythro-1-(imidazol-4-yl)glycerol 3-phosphate + 5-amino-1-(5-phospho-beta-D-ribosyl)imidazole-4-carboxamide + L-glutamate + H(+). The enzyme catalyses L-glutamine + H2O = L-glutamate + NH4(+). The protein operates within amino-acid biosynthesis; L-histidine biosynthesis; L-histidine from 5-phospho-alpha-D-ribose 1-diphosphate: step 5/9. IGPS catalyzes the conversion of PRFAR and glutamine to IGP, AICAR and glutamate. The HisH subunit catalyzes the hydrolysis of glutamine to glutamate and ammonia as part of the synthesis of IGP and AICAR. The resulting ammonia molecule is channeled to the active site of HisF. The polypeptide is Imidazole glycerol phosphate synthase subunit HisH (Streptococcus mutans serotype c (strain ATCC 700610 / UA159)).